A 238-amino-acid polypeptide reads, in one-letter code: Dof zinc finger protein MNB1A (238 aa).

Residues 1 to 13 (MQEASSAAAAGAE) show a composition bias toward low complexity. Positions 1–48 (MQEASSAAAAGAEPGRRAAQHQFAGVDLRRPKGYAAPAPAPAVGEGDP) are disordered. A Dof-type zinc finger spans residues 47–101 (DPCPRCASRDTKFCYYNNYNTSQPRHFCKGCRRYWTKGGTLRNVPVGGGTRKKPS). Zn(2+)-binding residues include C49, C52, C74, and C77. A disordered region spans residues 85-155 (GTLRNVPVGG…TATTTTTTSE (71 aa)). Positions 119–130 (PKKKPASKKRRV) are enriched in basic residues. Low complexity predominate over residues 138–155 (ATAADPGKTATTTTTTSE).

As to expression, expressed in all tissues examined.

It localises to the nucleus. In terms of biological role, transcription factor that binds specifically to a 5'-AA[AG]G-3' consensus core sequence at the MNF1-binding site. This chain is Dof zinc finger protein MNB1A (MNB1A), found in Zea mays (Maize).